We begin with the raw amino-acid sequence, 358 residues long: Holliday junction branch migration complex subunit RuvB (358 aa).

The segment at 1-24 (MSIQTDDFAAPPPKRILSGAPASP) is disordered. The large ATPase domain (RuvB-L) stretch occupies residues 5-194 (TDDFAAPPPK…FGIVARLEFY (190 aa)). ATP contacts are provided by residues Leu33, Arg34, Gly75, Lys78, Thr79, Thr80, 141–143 (EDY), Arg184, Tyr194, and Arg231. Thr79 contributes to the Mg(2+) binding site. The interval 195–265 (SPEELASIVR…IAHRALVMLD (71 aa)) is small ATPAse domain (RuvB-S). A head domain (RuvB-H) region spans residues 268–358 (PQGFDLMDRK…GDMFGAMRPE (91 aa)). Positions 304, 323, and 328 each coordinate DNA.

It belongs to the RuvB family. As to quaternary structure, homohexamer. Forms an RuvA(8)-RuvB(12)-Holliday junction (HJ) complex. HJ DNA is sandwiched between 2 RuvA tetramers; dsDNA enters through RuvA and exits via RuvB. An RuvB hexamer assembles on each DNA strand where it exits the tetramer. Each RuvB hexamer is contacted by two RuvA subunits (via domain III) on 2 adjacent RuvB subunits; this complex drives branch migration. In the full resolvosome a probable DNA-RuvA(4)-RuvB(12)-RuvC(2) complex forms which resolves the HJ.

The protein localises to the cytoplasm. The enzyme catalyses ATP + H2O = ADP + phosphate + H(+). Its function is as follows. The RuvA-RuvB-RuvC complex processes Holliday junction (HJ) DNA during genetic recombination and DNA repair, while the RuvA-RuvB complex plays an important role in the rescue of blocked DNA replication forks via replication fork reversal (RFR). RuvA specifically binds to HJ cruciform DNA, conferring on it an open structure. The RuvB hexamer acts as an ATP-dependent pump, pulling dsDNA into and through the RuvAB complex. RuvB forms 2 homohexamers on either side of HJ DNA bound by 1 or 2 RuvA tetramers; 4 subunits per hexamer contact DNA at a time. Coordinated motions by a converter formed by DNA-disengaged RuvB subunits stimulates ATP hydrolysis and nucleotide exchange. Immobilization of the converter enables RuvB to convert the ATP-contained energy into a lever motion, pulling 2 nucleotides of DNA out of the RuvA tetramer per ATP hydrolyzed, thus driving DNA branch migration. The RuvB motors rotate together with the DNA substrate, which together with the progressing nucleotide cycle form the mechanistic basis for DNA recombination by continuous HJ branch migration. Branch migration allows RuvC to scan DNA until it finds its consensus sequence, where it cleaves and resolves cruciform DNA. This chain is Holliday junction branch migration complex subunit RuvB, found in Albidiferax ferrireducens (strain ATCC BAA-621 / DSM 15236 / T118) (Rhodoferax ferrireducens).